A 26-amino-acid polypeptide reads, in one-letter code: Toxin b subunit alpha (26 aa).

In terms of assembly, toxin b is a heterodimer composed of toxin alpha and toxin beta. As to expression, expressed by the venom gland.

The protein resides in the secreted. Binds to sodium channels (Nav) and affects the channel activation process. The protein is Toxin b subunit alpha of Androctonus crassicauda (Arabian fat-tailed scorpion).